The chain runs to 161 residues: Pupal cuticle protein C1B (161 aa).

Tandem repeats lie at residues 6 to 9 (AAPA), 14 to 17 (AAPA), 35 to 38 (AAPA), 87 to 90 (AAPV), 103 to 106 (AAPV), 112 to 115 (AAPV), 121 to 124 (AAPV), 130 to 133 (AAPV), and 143 to 146 (AAPA).

Component of the cuticle of the pupa of Tenebrio molitor. This chain is Pupal cuticle protein C1B, found in Tenebrio molitor (Yellow mealworm beetle).